The chain runs to 347 residues: Aspartate-semialdehyde dehydrogenase (347 aa).

Residues 10–13 (TGMV) and 37–38 (RS) contribute to the NADP(+) site. Arginine 108 lines the phosphate pocket. The active-site Acyl-thioester intermediate is cysteine 147. Position 174 (glutamine 174) interacts with substrate. Residue 177-178 (SG) participates in NADP(+) binding. Glutamate 200 provides a ligand contact to substrate. Lysine 203 serves as a coordination point for phosphate. Residue arginine 233 coordinates substrate. The active-site Proton acceptor is histidine 240. The interval 276–299 (APEKPVVVRDEENRPQPRMDRDMD) is disordered. Positions 281–299 (VVVRDEENRPQPRMDRDMD) are enriched in basic and acidic residues. 327 to 328 (NT) is an NADP(+) binding site.

This sequence belongs to the aspartate-semialdehyde dehydrogenase family. In terms of assembly, homodimer.

It carries out the reaction L-aspartate 4-semialdehyde + phosphate + NADP(+) = 4-phospho-L-aspartate + NADPH + H(+). It functions in the pathway amino-acid biosynthesis; L-lysine biosynthesis via DAP pathway; (S)-tetrahydrodipicolinate from L-aspartate: step 2/4. Its pathway is amino-acid biosynthesis; L-methionine biosynthesis via de novo pathway; L-homoserine from L-aspartate: step 2/3. It participates in amino-acid biosynthesis; L-threonine biosynthesis; L-threonine from L-aspartate: step 2/5. In terms of biological role, catalyzes the NADPH-dependent formation of L-aspartate-semialdehyde (L-ASA) by the reductive dephosphorylation of L-aspartyl-4-phosphate. This chain is Aspartate-semialdehyde dehydrogenase, found in Methanothermobacter thermautotrophicus (strain ATCC 29096 / DSM 1053 / JCM 10044 / NBRC 100330 / Delta H) (Methanobacterium thermoautotrophicum).